Here is a 312-residue protein sequence, read N- to C-terminus: Olfactory receptor 2L3 (312 aa).

The Extracellular segment spans residues 1 to 24 (MENYNQTSTDFILLGFFPPSRIGL). N-linked (GlcNAc...) asparagine glycosylation occurs at Asn-5. Residues 25–48 (FLFILIVFIFLMALIGNLSMILLI) traverse the membrane as a helical segment. The Cytoplasmic portion of the chain corresponds to 49–56 (FLDTHLHT). Residues 57–78 (PMYFLLSQLSLIDLNYISTIVP) traverse the membrane as a helical segment. Residues 79–99 (KMASDFLSGNKSISFTGCGIQ) are Extracellular-facing. Residue Asn-88 is glycosylated (N-linked (GlcNAc...) asparagine). Cys-96 and Cys-188 are oxidised to a cystine. A helical transmembrane segment spans residues 100 to 119 (SFFFSALGGAEALLLASMAY). Residues 120 to 138 (DRYIAICFPLHYPIRMSKR) are Cytoplasmic-facing. A helical transmembrane segment spans residues 139-157 (MCVLMITGSWIIGSINACA). Over 158-194 (HTVYVLHIPYCQSRAINHFFCDVPAMVTLACMDTWVY) the chain is Extracellular. A helical transmembrane segment spans residues 195–218 (EGTVFLSTTIFLVFPFIAISCSYG). The Cytoplasmic portion of the chain corresponds to 219-235 (RVLLAVYHMKSAEGRKK). A helical transmembrane segment spans residues 236-258 (AYLTCSTHLTVVTFYYAPFVYTY). The Extracellular segment spans residues 259–271 (LRPRSLRSPTEDK). A helical membrane pass occupies residues 272 to 291 (VLAVFYTTLTPMLNPIIYSL). At 292 to 312 (RNKEVMGALTRVSQRICSGKM) the chain is on the cytoplasmic side.

This sequence belongs to the G-protein coupled receptor 1 family.

The protein resides in the cell membrane. In terms of biological role, odorant receptor. The chain is Olfactory receptor 2L3 (OR2L3) from Homo sapiens (Human).